Here is a 326-residue protein sequence, read N- to C-terminus: Beta-ketoacyl-[acyl-carrier-protein] synthase III (326 aa).

Active-site residues include C120 and H253. Residues 254–258 (QANIR) are ACP-binding. N283 is an active-site residue.

The protein belongs to the thiolase-like superfamily. FabH family. As to quaternary structure, homodimer.

The protein resides in the cytoplasm. The catalysed reaction is malonyl-[ACP] + acetyl-CoA + H(+) = 3-oxobutanoyl-[ACP] + CO2 + CoA. Its pathway is lipid metabolism; fatty acid biosynthesis. In terms of biological role, catalyzes the condensation reaction of fatty acid synthesis by the addition to an acyl acceptor of two carbons from malonyl-ACP. Catalyzes the first condensation reaction which initiates fatty acid synthesis and may therefore play a role in governing the total rate of fatty acid production. Possesses both acetoacetyl-ACP synthase and acetyl transacylase activities. Its substrate specificity determines the biosynthesis of branched-chain and/or straight-chain of fatty acids. In Cupriavidus taiwanensis (strain DSM 17343 / BCRC 17206 / CCUG 44338 / CIP 107171 / LMG 19424 / R1) (Ralstonia taiwanensis (strain LMG 19424)), this protein is Beta-ketoacyl-[acyl-carrier-protein] synthase III.